The chain runs to 197 residues: Adenylyl-sulfate kinase (197 aa).

31–38 (GLSGAGKS) lines the ATP pocket. The active-site Phosphoserine intermediate is the S105.

Belongs to the APS kinase family.

It catalyses the reaction adenosine 5'-phosphosulfate + ATP = 3'-phosphoadenylyl sulfate + ADP + H(+). It functions in the pathway sulfur metabolism; hydrogen sulfide biosynthesis; sulfite from sulfate: step 2/3. In terms of biological role, catalyzes the synthesis of activated sulfate. This is Adenylyl-sulfate kinase from Aeromonas hydrophila subsp. hydrophila (strain ATCC 7966 / DSM 30187 / BCRC 13018 / CCUG 14551 / JCM 1027 / KCTC 2358 / NCIMB 9240 / NCTC 8049).